The primary structure comprises 366 residues: Flagellar P-ring protein (366 aa).

The signal sequence occupies residues 1–27 (MKSKYSIFCMFLLRGFIFLGTVFSLNS).

Belongs to the FlgI family. In terms of assembly, the basal body constitutes a major portion of the flagellar organelle and consists of four rings (L,P,S, and M) mounted on a central rod.

The protein resides in the periplasm. It is found in the bacterial flagellum basal body. In terms of biological role, assembles around the rod to form the L-ring and probably protects the motor/basal body from shearing forces during rotation. The protein is Flagellar P-ring protein of Leptospira interrogans serogroup Icterohaemorrhagiae serovar copenhageni (strain Fiocruz L1-130).